The primary structure comprises 269 residues: Phosphate import ATP-binding protein PstB (269 aa).

The ABC transporter domain maps to 14–253 (LTLEDVSISY…EFDSTKKIFS (240 aa)). Residue 46-53 (GPSGCGKS) coordinates ATP.

It belongs to the ABC transporter superfamily. Phosphate importer (TC 3.A.1.7) family. In terms of assembly, the complex is composed of two ATP-binding proteins (PstB), two transmembrane proteins (PstC and PstA) and a solute-binding protein (PstS).

The protein resides in the cell inner membrane. It carries out the reaction phosphate(out) + ATP + H2O = ADP + 2 phosphate(in) + H(+). Its function is as follows. Part of the ABC transporter complex PstSACB involved in phosphate import. Responsible for energy coupling to the transport system. This is Phosphate import ATP-binding protein PstB from Prochlorococcus marinus subsp. pastoris (strain CCMP1986 / NIES-2087 / MED4).